Here is a 142-residue protein sequence, read N- to C-terminus: MVLSAADKSNVKAAWGKVGSNAGAYGAEALERMFLSFPTTKTYFPHFDLSHGSAQVKGHGEKVAAALTKAVGHLDDLPGTLSDLSDLHAHKLRVDPVNFKLLSHSLLVTLACHHPSDFTPAVHASLDKFLANVSTVLTSKYR.

In terms of domain architecture, Globin spans 2–142 (VLSAADKSNV…VSTVLTSKYR (141 aa)). An O2-binding site is contributed by His59. His88 provides a ligand contact to heme b.

This sequence belongs to the globin family. In terms of assembly, heterotetramer of two alpha chains and two beta chains.

Its function is as follows. Involved in oxygen transport from the lung to the various peripheral tissues. Functionally, hemopressin acts as an antagonist peptide of the cannabinoid receptor CNR1. Hemopressin-binding efficiently blocks cannabinoid receptor CNR1 and subsequent signaling. The sequence is that of Hemoglobin subunit alpha-2 (HBA2) from Capra hircus (Goat).